Reading from the N-terminus, the 404-residue chain is Nicotinate phosphoribosyltransferase (404 aa).

At His224 the chain carries Phosphohistidine; by autocatalysis.

Belongs to the NAPRTase family. Post-translationally, transiently phosphorylated on a His residue during the reaction cycle. Phosphorylation strongly increases the affinity for substrates and increases the rate of nicotinate D-ribonucleotide production. Dephosphorylation regenerates the low-affinity form of the enzyme, leading to product release.

It carries out the reaction nicotinate + 5-phospho-alpha-D-ribose 1-diphosphate + ATP + H2O = nicotinate beta-D-ribonucleotide + ADP + phosphate + diphosphate. The protein operates within cofactor biosynthesis; NAD(+) biosynthesis; nicotinate D-ribonucleotide from nicotinate: step 1/1. Its function is as follows. Catalyzes the synthesis of beta-nicotinate D-ribonucleotide from nicotinate and 5-phospho-D-ribose 1-phosphate at the expense of ATP. The polypeptide is Nicotinate phosphoribosyltransferase (Photorhabdus laumondii subsp. laumondii (strain DSM 15139 / CIP 105565 / TT01) (Photorhabdus luminescens subsp. laumondii)).